A 190-amino-acid chain; its full sequence is Small ribosomal subunit protein uS4c (190 aa).

An S4 RNA-binding domain is found at 92–152 (RLDHVVYRAG…KSPSSAQLPP (61 aa)).

The protein belongs to the universal ribosomal protein uS4 family. Part of the 30S ribosomal subunit. Contacts protein S5. The interaction surface between S4 and S5 is involved in control of translational fidelity.

It localises to the plastid. The protein localises to the chloroplast. Functionally, one of the primary rRNA binding proteins, it binds directly to 16S rRNA where it nucleates assembly of the body of the 30S subunit. Its function is as follows. With S5 and S12 plays an important role in translational accuracy. This Cyanidioschyzon merolae (strain NIES-3377 / 10D) (Unicellular red alga) protein is Small ribosomal subunit protein uS4c (rps4).